The following is a 448-amino-acid chain: Maltoporin (448 aa).

The first 25 residues, 1 to 25 (MMITLRKLPLAVAVMAGIFAAQASA), serve as a signal peptide directing secretion.

The protein belongs to the porin LamB (TC 1.B.3) family. Homotrimer formed of three 18-stranded antiparallel beta-barrels, containing three independent channels.

It localises to the cell outer membrane. The catalysed reaction is beta-maltose(in) = beta-maltose(out). Functionally, involved in the transport of maltose and maltodextrins. The protein is Maltoporin of Cronobacter sakazakii (strain ATCC BAA-894) (Enterobacter sakazakii).